A 333-amino-acid chain; its full sequence is Biotin synthase (333 aa).

Residues 51 to 281 (HFGNQVSLCG…DVHITICGGR (231 aa)) form the Radical SAM core domain. Positions 69, 73, and 76 each coordinate [4Fe-4S] cluster. A [2Fe-2S] cluster-binding site is contributed by C206.

This sequence belongs to the radical SAM superfamily. Biotin synthase family. In terms of assembly, homodimer. The cofactor is [4Fe-4S] cluster. It depends on [2Fe-2S] cluster as a cofactor.

The enzyme catalyses (4R,5S)-dethiobiotin + (sulfur carrier)-SH + 2 reduced [2Fe-2S]-[ferredoxin] + 2 S-adenosyl-L-methionine = (sulfur carrier)-H + biotin + 2 5'-deoxyadenosine + 2 L-methionine + 2 oxidized [2Fe-2S]-[ferredoxin]. It functions in the pathway cofactor biosynthesis; biotin biosynthesis; biotin from 7,8-diaminononanoate: step 2/2. Its function is as follows. Catalyzes the conversion of dethiobiotin (DTB) to biotin by the insertion of a sulfur atom into dethiobiotin via a radical-based mechanism. This Trichlorobacter lovleyi (strain ATCC BAA-1151 / DSM 17278 / SZ) (Geobacter lovleyi) protein is Biotin synthase.